Here is a 589-residue protein sequence, read N- to C-terminus: Multidrug transporter FLR2 (589 aa).

The tract at residues 50–116 (KEEMKQDNQT…SSTKDASKPE (67 aa)) is disordered. Low complexity predominate over residues 56–73 (DNQTSTDSMSTSTQQETD). N-linked (GlcNAc...) asparagine glycosylation occurs at asparagine 57. Positions 107 to 116 (SSTKDASKPE) are enriched in basic and acidic residues. Asparagine 136 carries N-linked (GlcNAc...) asparagine glycosylation. Helical transmembrane passes span 143 to 163 (TFVI…SSIY), 179 to 199 (VVGT…PIIF), 211 to 231 (MPLY…CALV), 234 to 254 (IAGL…VLAT), 275 to 295 (WAVG…AMVV), 301 to 321 (WIFW…IFFF), 378 to 398 (PIIL…YLFF), 417 to 437 (GLAF…LIIF), 455 to 475 (LFLI…FFFG), 480 to 500 (IHWI…FNLF), 516 to 536 (ASVF…FPLF), and 551 to 571 (VAWG…IPFV).

It belongs to the major facilitator superfamily.

The protein localises to the cell membrane. Its function is as follows. Multidrug transporter that confers resistance to 5-flucytosine (5-FC) and clotrimazole. Further confers azole drug resistance. Plays direct roles in extrusion of 5-flucytosine and clotrimazole. In Candida glabrata (strain ATCC 2001 / BCRC 20586 / JCM 3761 / NBRC 0622 / NRRL Y-65 / CBS 138) (Yeast), this protein is Multidrug transporter FLR2.